The chain runs to 311 residues: Protoheme IX farnesyltransferase 1 (311 aa).

Transmembrane regions (helical) follow at residues 31-51 (VMALAVFTAFVGLMVAPGAVN), 52-72 (PVIAVIAIAAIAIGAGAAGAL), 97-117 (VTPGEALGFGLVLSALSVMTL), 119-139 (VLVGWLAASLLAFTIFFYIVI), 152-172 (IVIGGAAGALPPVIGWAAATG), 179-199 (LVLFLIIFLWTPPHFWALALF), 225-245 (ILAYALLLAPVGVLPWAFGFT), 247-267 (GYYGIASAALGVGFIWHSWKV), and 281-301 (LFAYSIVYLFAVFAALLADTI).

Belongs to the UbiA prenyltransferase family. Protoheme IX farnesyltransferase subfamily.

It is found in the cell inner membrane. It catalyses the reaction heme b + (2E,6E)-farnesyl diphosphate + H2O = Fe(II)-heme o + diphosphate. Its pathway is porphyrin-containing compound metabolism; heme O biosynthesis; heme O from protoheme: step 1/1. Its function is as follows. Converts heme B (protoheme IX) to heme O by substitution of the vinyl group on carbon 2 of heme B porphyrin ring with a hydroxyethyl farnesyl side group. This is Protoheme IX farnesyltransferase 1 from Mesorhizobium japonicum (strain LMG 29417 / CECT 9101 / MAFF 303099) (Mesorhizobium loti (strain MAFF 303099)).